Here is a 199-residue protein sequence, read N- to C-terminus: uncharacterized protein (199 aa).

Transmembrane regions (helical) follow at residues 27-47 (LIKI…PILA), 55-75 (LLTL…VAAL), and 172-192 (LLLL…VLLL).

It is found in the cell membrane. This is an uncharacterized protein from Synechocystis sp. (strain ATCC 27184 / PCC 6803 / Kazusa).